The sequence spans 271 residues: ATP synthase subunit a (271 aa).

5 helical membrane passes run 38-58 (FWTLNIDSMFFSVVLGLLFLV), 100-120 (LIAPLALTIFVWVFLMNLMDL), 146-166 (DVNITLSMALGVFILILFYSI), 220-240 (LIFILIAGLLPWWSQWILNVP), and 242-262 (AIFHILIITLQAFIFMVLTIV).

It belongs to the ATPase A chain family. F-type ATPases have 2 components, CF(1) - the catalytic core - and CF(0) - the membrane proton channel. CF(1) has five subunits: alpha(3), beta(3), gamma(1), delta(1), epsilon(1). CF(0) has three main subunits: a(1), b(2) and c(9-12). The alpha and beta chains form an alternating ring which encloses part of the gamma chain. CF(1) is attached to CF(0) by a central stalk formed by the gamma and epsilon chains, while a peripheral stalk is formed by the delta and b chains.

It is found in the cell inner membrane. Functionally, key component of the proton channel; it plays a direct role in the translocation of protons across the membrane. This Salmonella choleraesuis (strain SC-B67) protein is ATP synthase subunit a.